A 439-amino-acid polypeptide reads, in one-letter code: Proline--tRNA ligase (439 aa).

The protein belongs to the class-II aminoacyl-tRNA synthetase family. ProS type 2 subfamily. As to quaternary structure, homodimer.

It is found in the cytoplasm. The catalysed reaction is tRNA(Pro) + L-proline + ATP = L-prolyl-tRNA(Pro) + AMP + diphosphate. Its function is as follows. Catalyzes the attachment of proline to tRNA(Pro) in a two-step reaction: proline is first activated by ATP to form Pro-AMP and then transferred to the acceptor end of tRNA(Pro). The protein is Proline--tRNA ligase of Beijerinckia indica subsp. indica (strain ATCC 9039 / DSM 1715 / NCIMB 8712).